We begin with the raw amino-acid sequence, 746 residues long: Histone-lysine N-methyltransferase EZH2 (746 aa).

An interaction with DNMT1, DNMT3A and DNMT3B region spans residues 1 to 340; that stretch reads MGQTGKKSEK…AKEFAAALTA (340 aa). At serine 21 the chain carries Phosphoserine; by PKB/AKT1. The segment at 39-68 is interaction with EED; it reads KSMFSSNRQKILERTEILNQEWKQRRIQPV. An O-linked (GlcNAc) serine glycan is attached at serine 75. Position 76 is a phosphoserine (serine 76). Positions 180-222 are disordered; it reads QYNDDDDDDDGDDPEEREEKQKDLEDHRDDKESRPPRKFPSDK. The span at 182-195 shows a compositional bias: acidic residues; the sequence is NDDDDDDDGDDPEE. Basic and acidic residues predominate over residues 196 to 222; the sequence is REEKQKDLEDHRDDKESRPPRKFPSDK. An interaction with CDYL region spans residues 329-522; it reads EGAKEFAAAL…SSNHVYNYQP (194 aa). A Phosphothreonine modification is found at threonine 339. The disordered stretch occupies residues 340–426; it reads AERIKTPPKR…PIKMKPNIEP (87 aa). Phosphothreonine; by CDK1 and CDK2 is present on threonine 345. A compositionally biased stretch (basic residues) spans 345 to 357; it reads TPPKRPGGRRRGR. A phosphoserine mark is found at serine 363 and serine 366. Threonine 367 carries the post-translational modification Phosphothreonine. A compositionally biased stretch (basic and acidic residues) spans 374 to 385; it reads ESKDTDSDREAG. Residue threonine 487 is modified to Phosphothreonine. In terms of domain architecture, CXC spans 503 to 605; the sequence is CRKIQLKKDG…SKNVSCKNCS (103 aa). Residues 612–727 form the SET domain; that stretch reads KHLLLAPSDV…TGEELFFDYR (116 aa). Residue lysine 634 forms a Glycyl lysine isopeptide (Lys-Gly) (interchain with G-Cter in SUMO2) linkage.

This sequence belongs to the class V-like SAM-binding methyltransferase superfamily. Histone-lysine methyltransferase family. EZ subfamily. Component of the PRC2/EED-EZH2 complex, which includes EED, EZH2, SUZ12, RBBP4 and RBBP7 and possibly AEBP2. The minimum components required for methyltransferase activity of the PRC2/EED-EZH2 complex are EED, EZH2 and SUZ12. The PRC2 complex may also interact with DNMT1, DNMT3A, DNMT3B and PHF1 via the EZH2 subunit and with SIRT1 via the SUZ12 subunit. Interacts with HDAC1 and HDAC2. Binds ATRX via the SET domain. Interacts with PRAME. Interacts with CDYL. Interacts with BMAL1, CLOCK and CRY1. Interacts with DNMT3L; the interaction is direct. Interacts with EZHIP; the interaction blocks EZH2 methyltransferase activity. Interacts with ZNF263; recruited to the SIX3 promoter along with other proteins involved in chromatin modification and transcriptional corepression where it contributes to transcriptional repression. Interacts with ARMC12. Interacts with ZMYND8; the interaction is dependent on the presence of chromatin. Interacts with DDX18; this interaction inhibits the PRC2 complex. Post-translationally, phosphorylated by AKT1. Phosphorylation by AKT1 reduces methyltransferase activity. Phosphorylation at Thr-345 by CDK1 and CDK2 promotes maintenance of H3K27me3 levels at EZH2-target loci, thus leading to epigenetic gene silencing. In terms of processing, sumoylated. Glycosylated: O-GlcNAcylation at Ser-75 by OGT increases stability of EZH2 and facilitates the formation of H3K27me3 by the PRC2/EED-EZH2 complex.

It is found in the nucleus. The enzyme catalyses L-lysyl(27)-[histone H3] + 3 S-adenosyl-L-methionine = N(6),N(6),N(6)-trimethyl-L-lysyl(27)-[histone H3] + 3 S-adenosyl-L-homocysteine + 3 H(+). Functionally, polycomb group (PcG) protein. Catalytic subunit of the PRC2/EED-EZH2 complex, which methylates 'Lys-9' (H3K9me) and 'Lys-27' (H3K27me) of histone H3, leading to transcriptional repression of the affected target gene. Able to mono-, di- and trimethylate 'Lys-27' of histone H3 to form H3K27me1, H3K27me2 and H3K27me3, respectively. Displays a preference for substrates with less methylation, loses activity when progressively more methyl groups are incorporated into H3K27, H3K27me0 &gt; H3K27me1 &gt; H3K27me2. Compared to EZH1-containing complexes, it is more abundant in embryonic stem cells and plays a major role in forming H3K27me3, which is required for embryonic stem cell identity and proper differentiation. The PRC2/EED-EZH2 complex may also serve as a recruiting platform for DNA methyltransferases, thereby linking two epigenetic repression systems. EZH2 can also methylate non-histone proteins such as the transcription factor GATA4 and the nuclear receptor RORA. Regulates the circadian clock via histone methylation at the promoter of the circadian genes. Essential for the CRY1/2-mediated repression of the CLOCK-BMAL1 transcriptional activation of PER1/2. Involved in the di and trimethylation of 'Lys-27' of histone H3 on PER1/2 promoters which is necessary for the CRY1/2 proteins to inhibit transcription. The protein is Histone-lysine N-methyltransferase EZH2 (EZH2) of Macaca fascicularis (Crab-eating macaque).